The sequence spans 673 residues: UvrABC system protein B (673 aa).

The 158-residue stretch at 26 to 183 (ANFEAGLAKQ…RHLTDLQYTR (158 aa)) folds into the Helicase ATP-binding domain. 39–46 (GVTGSGKT) contacts ATP. A Beta-hairpin motif is present at residues 92 to 115 (YYDYYQPEAYVPSSDTFIEKDSSI). The region spanning 431–597 (QVDDLMSEIH…SVERPISDIM (167 aa)) is the Helicase C-terminal domain. The tract at residues 601 to 631 (REDAAEKKSGKGRSKSRQVAEETPDYRAMKP) is disordered. A compositionally biased stretch (basic and acidic residues) spans 618 to 630 (QVAEETPDYRAMK). The 36-residue stretch at 635–670 (AGKLKSLEQKMYQHAKDLEFEAAAQIRDQIQKLKTA) folds into the UVR domain.

This sequence belongs to the UvrB family. In terms of assembly, forms a heterotetramer with UvrA during the search for lesions. Interacts with UvrC in an incision complex.

The protein resides in the cytoplasm. In terms of biological role, the UvrABC repair system catalyzes the recognition and processing of DNA lesions. A damage recognition complex composed of 2 UvrA and 2 UvrB subunits scans DNA for abnormalities. Upon binding of the UvrA(2)B(2) complex to a putative damaged site, the DNA wraps around one UvrB monomer. DNA wrap is dependent on ATP binding by UvrB and probably causes local melting of the DNA helix, facilitating insertion of UvrB beta-hairpin between the DNA strands. Then UvrB probes one DNA strand for the presence of a lesion. If a lesion is found the UvrA subunits dissociate and the UvrB-DNA preincision complex is formed. This complex is subsequently bound by UvrC and the second UvrB is released. If no lesion is found, the DNA wraps around the other UvrB subunit that will check the other stand for damage. The chain is UvrABC system protein B from Xanthomonas oryzae pv. oryzae (strain MAFF 311018).